A 426-amino-acid chain; its full sequence is Histidine--tRNA ligase (426 aa).

It belongs to the class-II aminoacyl-tRNA synthetase family.

Its subcellular location is the cytoplasm. It catalyses the reaction tRNA(His) + L-histidine + ATP = L-histidyl-tRNA(His) + AMP + diphosphate + H(+). This chain is Histidine--tRNA ligase, found in Saccharolobus islandicus (strain Y.N.15.51 / Yellowstone #2) (Sulfolobus islandicus).